A 139-amino-acid polypeptide reads, in one-letter code: Ribulose bisphosphate carboxylase small subunit (139 aa).

This sequence belongs to the RuBisCO small chain family. As to quaternary structure, heterohexadecamer of 8 large and 8 small subunits.

It localises to the plastid. It is found in the chloroplast. Functionally, ruBisCO catalyzes two reactions: the carboxylation of D-ribulose 1,5-bisphosphate, the primary event in carbon dioxide fixation, as well as the oxidative fragmentation of the pentose substrate in the photorespiration process. Both reactions occur simultaneously and in competition at the same active site. Although the small subunit is not catalytic it is essential for maximal activity. The protein is Ribulose bisphosphate carboxylase small subunit of Cylindrotheca sp. (strain N1) (Marine diatom).